A 276-amino-acid chain; its full sequence is Mitochondrial distribution and morphology protein 12 (276 aa).

The 276-residue stretch at 1–276 folds into the SMP-LTD domain; that stretch reads MSIDIQWNLL…FVWPSYFTLY (276 aa). Residues 68–104 form a disordered region; it reads TLYSDDSSSLDDEESDREEENMTELPPYGATENGVHK. Residues 75-89 show a composition bias toward acidic residues; sequence SSLDDEESDREEENM.

Belongs to the MDM12 family. In terms of assembly, component of the ER-mitochondria encounter structure (ERMES) or MDM complex, composed of mmm1, mdm10, mdm12 and mdm34. A mmm1 homodimer associates with one molecule of mdm12 on each side in a pairwise head-to-tail manner, and the SMP-LTD domains of mmm1 and mdm12 generate a continuous hydrophobic tunnel for phospholipid trafficking.

The protein localises to the mitochondrion outer membrane. It is found in the endoplasmic reticulum membrane. In terms of biological role, component of the ERMES/MDM complex, which serves as a molecular tether to connect the endoplasmic reticulum (ER) and mitochondria. Components of this complex are involved in the control of mitochondrial shape and protein biogenesis, and function in nonvesicular lipid trafficking between the ER and mitochondria. Mdm12 is required for the interaction of the ER-resident membrane protein mmm1 and the outer mitochondrial membrane-resident beta-barrel protein mdm10. The mdm12-mmm1 subcomplex functions in the major beta-barrel assembly pathway that is responsible for biogenesis of all mitochondrial outer membrane beta-barrel proteins, and acts in a late step after the SAM complex. The mdm10-mdm12-mmm1 subcomplex further acts in the TOM40-specific pathway after the action of the mdm12-mmm1 complex. Essential for establishing and maintaining the structure of mitochondria and maintenance of mtDNA nucleoids. The chain is Mitochondrial distribution and morphology protein 12 from Schizosaccharomyces japonicus (strain yFS275 / FY16936) (Fission yeast).